Consider the following 279-residue polypeptide: Secreted RxLR effector protein 90 (279 aa).

The signal sequence occupies residues 1-19 (MKSAAAFATFLTLSVFVAT). Residues 29–46 (RGLRSLADNQSTESSEGR) carry the RxLR-dEER motif. Disordered stretches follow at residues 29 to 53 (RGLRSLADNQSTESSEGRKDHYNHH) and 135 to 176 (ATPA…NLAG). An N-linked (GlcNAc...) asparagine glycan is attached at Asn37. Positions 135–146 (ATPAPTTSVPSS) are enriched in low complexity. Over residues 147-163 (LVNTDTSDNQLPTTPVA) the composition is skewed to polar residues. Residues 166–176 (QGGGIGSNLAG) show a composition bias toward gly residues. N-linked (GlcNAc...) asparagine glycosylation occurs at Asn217.

Belongs to the RxLR effector family.

Its subcellular location is the secreted. The protein resides in the host cell membrane. Its function is as follows. Secreted effector that completely suppresses the host cell death induced by cell death-inducing proteins. This is Secreted RxLR effector protein 90 from Plasmopara viticola (Downy mildew of grapevine).